A 461-amino-acid polypeptide reads, in one-letter code: MILSTQRLGRFMSPAPTPAPDAKPRTVLGYGSYAESLRIGEILRKETVGGALLVAAAVIALIWANSPVSDSYFALRDYKIGYEPWHLELSLGAWAADGLLAIFFFLVGLELKREFVAGDLRQLNKSIVPVAAAAGGVLVPALIYAAVNIYSPETLRGWAIPTATDIAFAVAVLAIIGSHLPSALRIFLLTLAVVDDLIAISIIAFFYSSDIQAAPLLLALIPLALYAFLAQRYRRFFGAHFMAAWAILLPLGIVTWALVHASGIHATVAGVLLGFAVPVLRSKASGGPEAGPGLAEIFEHRFRPISAGVAVPIFAFFSAGVAVGGWEGLGSALADPVAIGIIMALVLGKPIGIMGTTWILTKATRARLDGSFKWIDVFGVSLLAGIGFTVSLLVAELSFGHGSLHDDHAKVGILAASLLAAILATVVLRARNRQYRRAEELEKVDSDQDGIPDVYQHESRG.

The disordered stretch occupies residues 1 to 23 (MILSTQRLGRFMSPAPTPAPDAK). The next 12 helical transmembrane spans lie at 48–68 (VGGA…NSPV), 89–109 (LSLG…LVGL), 127–147 (IVPV…YAAV), 157–177 (GWAI…AIIG), 186–206 (IFLL…IAFF), 211–231 (IQAA…FLAQ), 236–256 (FFGA…IVTW), 257–277 (ALVH…GFAV), 305–325 (ISAG…AVGG), 339–359 (IGII…TTWI), 374–394 (WIDV…SLLV), and 408–428 (HAKV…TVVL).

Belongs to the NhaA Na(+)/H(+) (TC 2.A.33) antiporter family.

Its subcellular location is the cell membrane. It catalyses the reaction Na(+)(in) + 2 H(+)(out) = Na(+)(out) + 2 H(+)(in). Functionally, na(+)/H(+) antiporter that extrudes sodium in exchange for external protons. The chain is Na(+)/H(+) antiporter NhaA from Arthrobacter sp. (strain FB24).